The following is an 847-amino-acid chain: Glycogen phosphorylase, liver form (847 aa).

Position 2 is an N-acetylalanine (Ala-2). A Phosphoserine; by PHK; in form phosphorylase a modification is found at Ser-15. AMP contacts are provided by residues 43–45 (DRN), Tyr-76, and Arg-310. N6-succinyllysine is present on Lys-364. Lys-470 carries the N6-acetyllysine modification. Ser-524, Ser-561, and Ser-639 each carry phosphoserine. At Lys-681 the chain carries N6-(pyridoxal phosphate)lysine. At Lys-796 the chain carries N6-acetyllysine.

The protein belongs to the glycogen phosphorylase family. In terms of assembly, homodimer; enzymatically active. Interacts with PPP1R3B; recruits the phosphatase PP1 which dephosphorylates and inactivates PYGL/glycogen phosphorylase. Pyridoxal 5'-phosphate serves as cofactor. Post-translationally, acetylation, which is up-regulated by glucose and insulin and down-regulated by glucagon, inhibits the glycogen phosphorylase activity by promoting PPP1R3B-mediated recruitment of phosphatase PP1 and Ser-15 dephosphorylation. In terms of processing, phosphorylation at Ser-15 converts inactive phosphorylase b into active phosphorylase a. Dephosphorylation of Ser-15 by phosphatase PP1 inactivates the enzyme.

It localises to the cytoplasm. The protein localises to the cytosol. It catalyses the reaction [(1-&gt;4)-alpha-D-glucosyl](n) + phosphate = [(1-&gt;4)-alpha-D-glucosyl](n-1) + alpha-D-glucose 1-phosphate. Allosterically regulated through the non-covalent binding of metabolites, being activated by AMP and inhibited by ATP, ADP, and glucose-6-phosphate. The activity is also controlled by post-translational modifications including phosphorylation and acetylation. Functionally, allosteric enzyme that catalyzes the rate-limiting step in glycogen catabolism, the phosphorolytic cleavage of glycogen to produce glucose-1-phosphate, and plays a central role in maintaining cellular and organismal glucose homeostasis. The protein is Glycogen phosphorylase, liver form of Homo sapiens (Human).